We begin with the raw amino-acid sequence, 403 residues long: Phosphopentomutase (403 aa).

Mn(2+)-binding residues include D13, D298, H303, D339, H340, and H351.

This sequence belongs to the phosphopentomutase family. Mn(2+) serves as cofactor.

It localises to the cytoplasm. It catalyses the reaction 2-deoxy-alpha-D-ribose 1-phosphate = 2-deoxy-D-ribose 5-phosphate. It carries out the reaction alpha-D-ribose 1-phosphate = D-ribose 5-phosphate. Its pathway is carbohydrate degradation; 2-deoxy-D-ribose 1-phosphate degradation; D-glyceraldehyde 3-phosphate and acetaldehyde from 2-deoxy-alpha-D-ribose 1-phosphate: step 1/2. Its function is as follows. Isomerase that catalyzes the conversion of deoxy-ribose 1-phosphate (dRib-1-P) and ribose 1-phosphate (Rib-1-P) to deoxy-ribose 5-phosphate (dRib-5-P) and ribose 5-phosphate (Rib-5-P), respectively. The chain is Phosphopentomutase from Streptococcus thermophilus (strain CNRZ 1066).